Consider the following 123-residue polypeptide: Phosphoribosyl-AMP cyclohydrolase (123 aa).

Asp81 contributes to the Mg(2+) binding site. Position 82 (Cys82) interacts with Zn(2+). Residues Asp83 and Asp85 each coordinate Mg(2+). Cys98 and Cys105 together coordinate Zn(2+).

The protein belongs to the PRA-CH family. In terms of assembly, homodimer. It depends on Mg(2+) as a cofactor. Zn(2+) is required as a cofactor.

It is found in the cytoplasm. The enzyme catalyses 1-(5-phospho-beta-D-ribosyl)-5'-AMP + H2O = 1-(5-phospho-beta-D-ribosyl)-5-[(5-phospho-beta-D-ribosylamino)methylideneamino]imidazole-4-carboxamide. It functions in the pathway amino-acid biosynthesis; L-histidine biosynthesis; L-histidine from 5-phospho-alpha-D-ribose 1-diphosphate: step 3/9. Functionally, catalyzes the hydrolysis of the adenine ring of phosphoribosyl-AMP. In Nocardioides sp. (strain ATCC BAA-499 / JS614), this protein is Phosphoribosyl-AMP cyclohydrolase.